Here is a 368-residue protein sequence, read N- to C-terminus: Galanin receptor type 3 (368 aa).

Residues 1-20 (MADAQNISLDSPGSVGAVAV) lie on the Extracellular side of the membrane. N6 carries an N-linked (GlcNAc...) asparagine glycan. The chain crosses the membrane as a helical span at residues 21–41 (PVVFALIFLLGTVGNGLVLAV). The Cytoplasmic segment spans residues 42–57 (LLQPGPSAWQEPGSTT). Residues 58–78 (DLFILNLAVADLCFILCCVPF) traverse the membrane as a helical segment. The Extracellular segment spans residues 79-96 (QATIYTLDAWLFGALVCK). The cysteines at positions 95 and 172 are disulfide-linked. The helical transmembrane segment at 97–118 (AVHLLIYLTMYASSFTLAAVSV) threads the bilayer. Over 119–138 (DRYLAVRHPLRSRALRTPRN) the chain is Cytoplasmic. The helical transmembrane segment at 139–159 (ARAAVGLVWLLAALFSAPYLS) threads the bilayer. The Extracellular portion of the chain corresponds to 160-184 (YYGTVRYGALELCVPAWEDARRRAL). The helical transmembrane segment at 185 to 205 (DVATFAAGYLLPVAVVSLAYG) threads the bilayer. At 206–236 (RTLRFLWAAVGPAGAAAAEARRRATGRAGRA) the chain is on the cytoplasmic side. A helical transmembrane segment spans residues 237–257 (MLAVAALYALCWGPHHALILC). Residues 258-259 (FW) lie on the Extracellular side of the membrane. Residues 260 to 280 (YGRFAFSPATYACRLASHCLA) form a helical membrane-spanning segment. The Cytoplasmic segment spans residues 281-368 (YANSCLNPLV…HGGEAARGPE (88 aa)). C308 carries S-palmitoyl cysteine lipidation. The disordered stretch occupies residues 317 to 368 (RRALRRVRPASSGPPGCPGDARPSGRLLAGGGQGPEPREGPVHGGEAARGPE).

This sequence belongs to the G-protein coupled receptor 1 family.

It is found in the cell membrane. Its function is as follows. Receptor for the hormone galanin. Receptor for the hormone spexin-1. The sequence is that of Galanin receptor type 3 (GALR3) from Homo sapiens (Human).